Here is a 41-residue protein sequence, read N- to C-terminus: Pathogenesis-related protein (41 aa).

This sequence belongs to the CRISP family.

In terms of biological role, probably involved in the defense reaction of plants against pathogens. This Cucumis melo (Muskmelon) protein is Pathogenesis-related protein.